Reading from the N-terminus, the 294-residue chain is N-acetylmuramic acid 6-phosphate etherase (294 aa).

The 164-residue stretch at 54–217 (VIKSFEEEGR…STASMIGVGK (164 aa)) folds into the SIS domain. The active-site Proton donor is Glu82. Glu113 is a catalytic residue.

Belongs to the GCKR-like family. MurNAc-6-P etherase subfamily. In terms of assembly, homodimer.

The enzyme catalyses N-acetyl-D-muramate 6-phosphate + H2O = N-acetyl-D-glucosamine 6-phosphate + (R)-lactate. It participates in amino-sugar metabolism; N-acetylmuramate degradation. Specifically catalyzes the cleavage of the D-lactyl ether substituent of MurNAc 6-phosphate, producing GlcNAc 6-phosphate and D-lactate. In Bacillus cereus (strain G9842), this protein is N-acetylmuramic acid 6-phosphate etherase.